Consider the following 334-residue polypeptide: Chitin synthase export chaperone (334 aa).

Transmembrane regions (helical) follow at residues 49–69 (IIFEGAASVMHIVALIMTVIM), 85–105 (ILSFFYLYMLLTAMSLIIDAG), 123–143 (GLSSAVITCLLINGFVGFQLY), 159–179 (LAAFAISFLVSLATFKSWAGL), 185–205 (VGLFVVLYLLNAVQLFVYVAM), 220–240 (LGDIAFGIFFFVAGQVLLYAF), and 244–264 (ICIAISHYLDGLFLATVCNLL).

It belongs to the CHS7 family.

The protein resides in the endoplasmic reticulum membrane. In terms of biological role, chaperone required for the export of the chitin synthase chs3 from the endoplasmic reticulum. Plays a critical role in cell wall integrity and virulence. The protein is Chitin synthase export chaperone of Fusarium oxysporum f. sp. lycopersici (strain 4287 / CBS 123668 / FGSC 9935 / NRRL 34936) (Fusarium vascular wilt of tomato).